A 554-amino-acid chain; its full sequence is Methyl-coenzyme M reductase II subunit alpha (554 aa).

Q151 serves as a coordination point for coenzyme F430. Coenzyme B contacts are provided by residues R229, K260–H261, and R274. Positions 336 and 447 each coordinate coenzyme M.

The protein belongs to the methyl-coenzyme M reductase alpha subunit family. In terms of assembly, MCR is a hexamer of two alpha, two beta, and two gamma chains, forming a dimer of heterotrimers. It depends on coenzyme F430 as a cofactor.

It carries out the reaction coenzyme B + methyl-coenzyme M = methane + coenzyme M-coenzyme B heterodisulfide. It participates in one-carbon metabolism; methyl-coenzyme M reduction; methane from methyl-coenzyme M: step 1/1. Its function is as follows. Component of the methyl-coenzyme M reductase (MCR) I that catalyzes the reductive cleavage of methyl-coenzyme M (CoM-S-CH3 or 2-(methylthio)ethanesulfonate) using coenzyme B (CoB or 7-mercaptoheptanoylthreonine phosphate) as reductant which results in the production of methane and the mixed heterodisulfide of CoB and CoM (CoM-S-S-CoB). This is the final step in methanogenesis. The chain is Methyl-coenzyme M reductase II subunit alpha (mrtA) from Methanothermus fervidus (strain ATCC 43054 / DSM 2088 / JCM 10308 / V24 S).